The following is a 248-amino-acid chain: 3-deoxy-manno-octulosonate cytidylyltransferase (248 aa).

Belongs to the KdsB family.

It is found in the cytoplasm. It catalyses the reaction 3-deoxy-alpha-D-manno-oct-2-ulosonate + CTP = CMP-3-deoxy-beta-D-manno-octulosonate + diphosphate. It participates in nucleotide-sugar biosynthesis; CMP-3-deoxy-D-manno-octulosonate biosynthesis; CMP-3-deoxy-D-manno-octulosonate from 3-deoxy-D-manno-octulosonate and CTP: step 1/1. The protein operates within bacterial outer membrane biogenesis; lipopolysaccharide biosynthesis. Its function is as follows. Activates KDO (a required 8-carbon sugar) for incorporation into bacterial lipopolysaccharide in Gram-negative bacteria. This Salmonella paratyphi A (strain ATCC 9150 / SARB42) protein is 3-deoxy-manno-octulosonate cytidylyltransferase.